The sequence spans 394 residues: Beta-ketothiolase BktB (394 aa).

Catalysis depends on C90, which acts as the Acyl-thioester intermediate. Catalysis depends on proton acceptor residues H350 and C380.

It belongs to the thiolase-like superfamily. Thiolase family.

It carries out the reaction an acyl-CoA + acetyl-CoA = a 3-oxoacyl-CoA + CoA. The catalysed reaction is 2 acetyl-CoA = acetoacetyl-CoA + CoA. In terms of biological role, required for efficient production of poly(beta-hydroxybutyrate-co-beta-hydroxyvalerate) (PHBV). Catalyzes the condensation of acetyl-CoA and propionyl-CoA to form beta-ketovaleryl-CoA, and the condensation of two acetyl-CoA molecules to form acetoacetyl-CoA. The chain is Beta-ketothiolase BktB (bktB) from Cupriavidus necator (strain ATCC 17699 / DSM 428 / KCTC 22496 / NCIMB 10442 / H16 / Stanier 337) (Ralstonia eutropha).